A 229-amino-acid polypeptide reads, in one-letter code: Heptaprenylglyceryl phosphate synthase (229 aa).

Lysine 12 provides a ligand contact to sn-glycerol 1-phosphate. 2 residues coordinate Mg(2+): aspartate 14 and serine 40. Sn-glycerol 1-phosphate contacts are provided by residues 159 to 164 (YLEYSG), glycine 189, and 209 to 210 (GN).

The protein belongs to the GGGP/HepGP synthase family. Group I subfamily. As to quaternary structure, homodimer. Mg(2+) is required as a cofactor.

The enzyme catalyses sn-glycerol 1-phosphate + all-trans-heptaprenyl diphosphate = 3-heptaprenyl-sn-glycero-1-phosphate + diphosphate. Its pathway is membrane lipid metabolism; glycerophospholipid metabolism. Its function is as follows. Prenyltransferase that catalyzes in vivo the transfer of the heptaprenyl moiety of heptaprenyl pyrophosphate (HepPP; 35 carbon atoms) to the C3 hydroxyl of sn-glycerol-1-phosphate (G1P), producing heptaprenylglyceryl phosphate (HepGP). This reaction is an ether-bond-formation step in the biosynthesis of archaea-type G1P-based membrane lipids found in Bacillales. The sequence is that of Heptaprenylglyceryl phosphate synthase from Bacillus cereus (strain B4264).